Consider the following 89-residue polypeptide: Small ribosomal subunit protein uS15 (89 aa).

The segment at 1–23 is disordered; the sequence is MSLDTTEKQQLINANQTHGTDTG. Residues 8–23 show a composition bias toward polar residues; that stretch reads KQQLINANQTHGTDTG.

It belongs to the universal ribosomal protein uS15 family. Part of the 30S ribosomal subunit. Forms a bridge to the 50S subunit in the 70S ribosome, contacting the 23S rRNA.

Functionally, one of the primary rRNA binding proteins, it binds directly to 16S rRNA where it helps nucleate assembly of the platform of the 30S subunit by binding and bridging several RNA helices of the 16S rRNA. In terms of biological role, forms an intersubunit bridge (bridge B4) with the 23S rRNA of the 50S subunit in the ribosome. The chain is Small ribosomal subunit protein uS15 from Prochlorococcus marinus (strain MIT 9313).